The following is a 442-amino-acid chain: tRNA pseudouridine(38/39) synthase (442 aa).

The active-site Nucleophile is Asp151. Tyr222 provides a ligand contact to substrate.

This sequence belongs to the tRNA pseudouridine synthase TruA family.

The protein localises to the nucleus. It carries out the reaction uridine(38/39) in tRNA = pseudouridine(38/39) in tRNA. Its function is as follows. Formation of pseudouridines at positions 38 and 39 in the anticodon stem and loop of transfer RNAs. The polypeptide is tRNA pseudouridine(38/39) synthase (DEG1) (Saccharomyces cerevisiae (strain ATCC 204508 / S288c) (Baker's yeast)).